We begin with the raw amino-acid sequence, 238 residues long: Survival of motor neuron-related-splicing factor 30 (238 aa).

The 61-residue stretch at 72–132 (SWKVGDKCMA…KPVEEGRKAK (61 aa)) folds into the Tudor domain. Positions 142–160 (KKEMIAQQREYKKKKALKK) match the Nuclear localization signal motif. Position 201 is a phosphoserine (serine 201). Lysine 219 bears the N6-acetyllysine mark.

Belongs to the SMN family. As to quaternary structure, associates with spliceosomes. Associates with U4/U5/U6 tri-snRNP and with U2 snRNP.

Its subcellular location is the nucleus speckle. The protein resides in the nucleus. It is found in the cajal body. Involved in spliceosome assembly. The protein is Survival of motor neuron-related-splicing factor 30 (Smndc1) of Rattus norvegicus (Rat).